The following is a 320-amino-acid chain: (+)-corvol ether B synthase/(+)-corvol ether A synthase ((2E,6E)-farnesyl diphosphate cyclizing) (320 aa).

Aspartate 78 and aspartate 83 together coordinate Mg(2+). Residues 78–83 (DDLFVD) carry the DDXXXD motif motif. Position 171 (arginine 171) interacts with substrate. Residues asparagine 217, serine 221, and glutamate 225 each contribute to the Mg(2+) site.

Belongs to the terpene synthase family. Requires Mg(2+) as cofactor.

The catalysed reaction is (2E,6E)-farnesyl diphosphate + H2O = (+)-corvol ether B + diphosphate. The enzyme catalyses (2E,6E)-farnesyl diphosphate + H2O = (+)-corvol ether A + diphosphate. The protein operates within secondary metabolite biosynthesis; terpenoid biosynthesis. In terms of biological role, catalyzes the conversion of (2E,6E)-farnesyl diphosphate (FPP) into (+)-corvol ether A and (+)-corvol ether B via a 1,10-cyclization, which requires isomerization of FPP to nerolidyl diphosphate (NPP) and then abstraction of the pyrophosphate from intermediate NPP leading to a (E,Z)-germacradienyl (helminthogermacradienyl) cation. The preferred substrate is (2E,6E)-farnesyl diphosphate (FPP), however geranyl diphosphate (GPP) is also able to produce small amounts of several acyclic and cyclic monoterpenes, with linalool as the main product. The protein is (+)-corvol ether B synthase/(+)-corvol ether A synthase ((2E,6E)-farnesyl diphosphate cyclizing) of Kitasatospora setae (strain ATCC 33774 / DSM 43861 / JCM 3304 / KCC A-0304 / NBRC 14216 / KM-6054) (Streptomyces setae).